Here is a 104-residue protein sequence, read N- to C-terminus: Large ribosomal subunit protein uL24 (104 aa).

The protein belongs to the universal ribosomal protein uL24 family. Part of the 50S ribosomal subunit.

Functionally, one of two assembly initiator proteins, it binds directly to the 5'-end of the 23S rRNA, where it nucleates assembly of the 50S subunit. Its function is as follows. One of the proteins that surrounds the polypeptide exit tunnel on the outside of the subunit. The protein is Large ribosomal subunit protein uL24 of Hydrogenovibrio crunogenus (strain DSM 25203 / XCL-2) (Thiomicrospira crunogena).